Consider the following 416-residue polypeptide: Creatine kinase U-type, mitochondrial (416 aa).

The transit peptide at 1–39 (MAGPFSRLLSARPGLRLLALAGAGSLAAGFLLRSEPVRA) directs the protein to the mitochondrion. The cardiolipin-binding stretch occupies residues 40 to 64 (ASERRRLYPPSAEYPDLRKHNNCMA). In terms of domain architecture, Phosphagen kinase N-terminal spans 45–131 (RLYPPSAEYP…FDPVIQERHN (87 aa)). At serine 151 the chain carries Phosphoserine. Positions 158-400 (YVLSSRVRTG…NFLIDCERRL (243 aa)) constitute a Phosphagen kinase C-terminal domain. 161–165 (SSRVR) contacts ATP. Residue serine 196 is modified to Phosphoserine. Threonine 213 carries the phosphothreonine modification. An ATP-binding site is contributed by histidine 224. Position 232 is a phosphoserine (serine 232). Residues arginine 269, arginine 325, and 353–358 (RGTGGV) each bind ATP. Threonine 355 bears the Phosphothreonine mark. Serine 365 bears the Phosphoserine mark. Aspartate 368 provides a ligand contact to ATP.

Belongs to the ATP:guanido phosphotransferase family. As to quaternary structure, exists as an octamer composed of four MTCK homodimers.

It is found in the mitochondrion inner membrane. It carries out the reaction creatine + ATP = N-phosphocreatine + ADP + H(+). Functionally, reversibly catalyzes the transfer of phosphate between ATP and various phosphogens (e.g. creatine phosphate). Creatine kinase isoenzymes play a central role in energy transduction in tissues with large, fluctuating energy demands, such as skeletal muscle, heart, brain and spermatozoa. The sequence is that of Creatine kinase U-type, mitochondrial (CKMT1) from Bos taurus (Bovine).